Consider the following 337-residue polypeptide: Sorting nexin-15 (337 aa).

Residues 1-130 form the PX domain; the sequence is MSRQAKDDFL…EFFRGGEVTR (130 aa). 4 residues coordinate a 1,2-diacyl-sn-glycero-3-phospho-(1D-myo-inositol-3-phosphate): Arg-51, Ser-53, Arg-87, and Arg-96. Residue Arg-105 is modified to Omega-N-methylarginine. Residues 133–156 are disordered; it reads EVSRDLRILPPPLIPTPPPDEARL. A compositionally biased stretch (pro residues) spans 141–151; sequence LPPPLIPTPPP. Phosphoserine occurs at positions 201 and 227. A disordered region spans residues 244 to 270; it reads LDQEPWEPGGQEEEEAEDGEPAPAYLG. Positions 253 to 263 are enriched in acidic residues; sequence GQEEEEAEDGE. Residues 265-337 form the MIT domain; the sequence is APAYLGQATE…RAEMLHTHLP (73 aa).

Belongs to the sorting nexin family. As to quaternary structure, homodimer. Interacts with SNX1, SNX2 and SNX4.

It localises to the cytoplasm. The protein resides in the membrane. Its subcellular location is the cytoplasmic vesicle membrane. Its function is as follows. May be involved in several stages of intracellular trafficking. Overexpression of SNX15 disrupts the normal trafficking of proteins from the plasma membrane to recycling endosomes or the TGN. This is Sorting nexin-15 (Snx15) from Mus musculus (Mouse).